Consider the following 208-residue polypeptide: Holliday junction branch migration complex subunit RuvA (208 aa).

The domain I stretch occupies residues methionine 1–alanine 64. The domain II stretch occupies residues serine 65–valine 143. Residues alanine 139–serine 162 are disordered. The flexible linker stretch occupies residues proline 144–alanine 157. Residues glycine 158–arginine 208 form a domain III region.

Belongs to the RuvA family. In terms of assembly, homotetramer. Forms an RuvA(8)-RuvB(12)-Holliday junction (HJ) complex. HJ DNA is sandwiched between 2 RuvA tetramers; dsDNA enters through RuvA and exits via RuvB. An RuvB hexamer assembles on each DNA strand where it exits the tetramer. Each RuvB hexamer is contacted by two RuvA subunits (via domain III) on 2 adjacent RuvB subunits; this complex drives branch migration. In the full resolvosome a probable DNA-RuvA(4)-RuvB(12)-RuvC(2) complex forms which resolves the HJ.

The protein localises to the cytoplasm. The RuvA-RuvB-RuvC complex processes Holliday junction (HJ) DNA during genetic recombination and DNA repair, while the RuvA-RuvB complex plays an important role in the rescue of blocked DNA replication forks via replication fork reversal (RFR). RuvA specifically binds to HJ cruciform DNA, conferring on it an open structure. The RuvB hexamer acts as an ATP-dependent pump, pulling dsDNA into and through the RuvAB complex. HJ branch migration allows RuvC to scan DNA until it finds its consensus sequence, where it cleaves and resolves the cruciform DNA. The chain is Holliday junction branch migration complex subunit RuvA from Alkalilimnicola ehrlichii (strain ATCC BAA-1101 / DSM 17681 / MLHE-1).